Reading from the N-terminus, the 265-residue chain is Undecaprenyl-diphosphatase (265 aa).

Helical transmembrane passes span 14 to 34 (GLGE…PWLF), 40 to 60 (SLVF…VYFW), 79 to 99 (GKLF…GYLF), 112 to 132 (LLIA…DSIA), 141 to 161 (MNVF…FPGI), 182 to 202 (AKFS…VSLL), 217 to 237 (IGFF…LGIV), and 242 to 262 (FKIF…FYLL).

The protein belongs to the UppP family.

The protein resides in the cell membrane. The enzyme catalyses di-trans,octa-cis-undecaprenyl diphosphate + H2O = di-trans,octa-cis-undecaprenyl phosphate + phosphate + H(+). Its function is as follows. Catalyzes the dephosphorylation of undecaprenyl diphosphate (UPP). Confers resistance to bacitracin. This chain is Undecaprenyl-diphosphatase, found in Caldicellulosiruptor bescii (strain ATCC BAA-1888 / DSM 6725 / KCTC 15123 / Z-1320) (Anaerocellum thermophilum).